The sequence spans 522 residues: Calcium-dependent protein kinase 4 (522 aa).

Over residues 1-10 (MGACFSSHTA) the composition is skewed to polar residues. Residues 1–43 (MGACFSSHTATAAADGGSGKRQQRKGDHKGKLPDGGGGEKEKE) form a disordered region. A lipid anchor (N-myristoyl glycine) is attached at G2. Residues 29-43 (KGKLPDGGGGEKEKE) are compositionally biased toward basic and acidic residues. Positions 59–319 (YQVGRLLGHG…AAQALSHPWV (261 aa)) constitute a Protein kinase domain. ATP is bound by residues 65 to 73 (LGHGQFGYT) and K88. D185 functions as the Proton acceptor in the catalytic mechanism. The segment at 325 to 355 (ASEIPVDISVLSNMRQFVKYSRFKQFALRAL) is autoinhibitory domain. 4 consecutive EF-hand domains span residues 362 to 397 (EELA…DLPW), 399 to 434 (LKGP…IHQM), 441 to 476 (RWGL…GLKG), and 481 to 508 (LLEE…ASMS). 19 residues coordinate Ca(2+): D375, D377, S379, S381, E386, D412, N414, D416, E423, D454, D456, D458, Y460, E465, D486, D488, D490, R492, and E497.

Belongs to the protein kinase superfamily. Ser/Thr protein kinase family. CDPK subfamily.

The protein localises to the membrane. The enzyme catalyses L-seryl-[protein] + ATP = O-phospho-L-seryl-[protein] + ADP + H(+). It carries out the reaction L-threonyl-[protein] + ATP = O-phospho-L-threonyl-[protein] + ADP + H(+). With respect to regulation, activated by calcium. Autophosphorylation may play an important role in the regulation of the kinase activity. Functionally, may play a role in signal transduction pathways that involve calcium as a second messenger. This chain is Calcium-dependent protein kinase 4, found in Oryza sativa subsp. japonica (Rice).